Here is a 574-residue protein sequence, read N- to C-terminus: 3-hydroxy-3-methylglutaryl-coenzyme A reductase 3 (574 aa).

The segment at 1-30 (MDVRRRPVKPLYPSEHISSGEPLKPHNQDS) is disordered. A helical membrane pass occupies residues 41–61 (PLYLTNGLFFTMFFSVMYFLL). Residue N78 is glycosylated (N-linked (GlcNAc...) asparagine). Residues 83-103 (VAMVSLIASVIYLLGFFGIGF) form a helical membrane-spanning segment. A linker region spans residues 104-161 (VQSFVSKGNNDSWDVEDESPEQFIDRTVTPPPVRRNIPMKSVPVAEKTAQIITPFSSE). N-linked (GlcNAc...) asparagine glycosylation occurs at N113. The segment at 162 to 574 (DDEVVIKSVV…YNRSCKDVTK (413 aa)) is catalytic. E256 acts as the Charge relay system in catalysis. N320 carries an N-linked (GlcNAc...) asparagine glycan. The active-site Charge relay system is the K388. N-linked (GlcNAc...) asparagine glycosylation occurs at N433. The Charge relay system role is filled by D464. The active-site Proton donor is the H562. N566 carries an N-linked (GlcNAc...) asparagine glycan.

This sequence belongs to the HMG-CoA reductase family. In terms of tissue distribution, expressed in mature petals and anthers.

It is found in the endoplasmic reticulum membrane. The enzyme catalyses (R)-mevalonate + 2 NADP(+) + CoA = (3S)-3-hydroxy-3-methylglutaryl-CoA + 2 NADPH + 2 H(+). The protein operates within metabolic intermediate biosynthesis; (R)-mevalonate biosynthesis; (R)-mevalonate from acetyl-CoA: step 3/3. Catalyzes the synthesis of mevalonate. The specific precursor of all isoprenoid compounds present in plants. This is 3-hydroxy-3-methylglutaryl-coenzyme A reductase 3 (HMG3) from Solanum tuberosum (Potato).